Consider the following 124-residue polypeptide: Small ribosomal subunit protein uS12 (124 aa).

A 3-methylthioaspartic acid modification is found at D89.

This sequence belongs to the universal ribosomal protein uS12 family. As to quaternary structure, part of the 30S ribosomal subunit. Contacts proteins S8 and S17. May interact with IF1 in the 30S initiation complex.

In terms of biological role, with S4 and S5 plays an important role in translational accuracy. Interacts with and stabilizes bases of the 16S rRNA that are involved in tRNA selection in the A site and with the mRNA backbone. Located at the interface of the 30S and 50S subunits, it traverses the body of the 30S subunit contacting proteins on the other side and probably holding the rRNA structure together. The combined cluster of proteins S8, S12 and S17 appears to hold together the shoulder and platform of the 30S subunit. This Shewanella baltica (strain OS223) protein is Small ribosomal subunit protein uS12.